The following is a 171-amino-acid chain: ASQKRPSQRHGSKYLATASTMDHARHGFLPRHRDTGILDSIGRFFGGDRGAPKRGSGKDSHHPARTAHYGSLPQKSGHRTQDENPVVHFFKNIVTPRTPPPSQGKGRGLSLSRFSWGAEGQRPGFGYGGRASDYKSAHKGFKGAQDAQGTLSKIFKLGGRDSRSGSPMARR.

Residue Ala1 is modified to N-acetylalanine. Phosphoserine occurs at positions 7 and 12. Tyr14 bears the Phosphotyrosine mark. At Thr17 the chain carries Phosphothreonine. Ser19 is modified (phosphoserine). A Phosphothreonine modification is found at Thr20. Citrulline occurs at positions 25 and 31. Position 35 is a phosphothreonine (Thr35). Phosphoserine is present on Ser40. Omega-N-methylarginine occurs at positions 43 and 49. The tract at residues Phe44–Ser115 is disordered. Ser56 carries the phosphoserine modification. Residue Tyr69 is modified to Phosphotyrosine. Ser76 is modified (phosphoserine). Phosphothreonine occurs at positions 80, 95, and 98. At Gln103 the chain carries Deamidated glutamine. Arg107 carries the post-translational modification Omega-N-methylarginine; alternate. A Symmetric dimethylarginine; alternate modification is found at Arg107. Ser115 carries the post-translational modification Phosphoserine. 2 positions are modified to citrulline: Arg122 and Arg130. Residue Gln148 is modified to Deamidated glutamine. Arg160 bears the Citrulline mark. Phosphoserine is present on Ser162. Ser166 carries the post-translational modification Phosphoserine; by UHMK1. At Arg171 the chain carries Citrulline.

Belongs to the myelin basic protein family. Homodimer. As in other animals, several charge isomers may be produced as a result of optional post-translational modifications, such as phosphorylation of serine or threonine residues, deamidation of glutamine or asparagine residues, citrullination and methylation of arginine residues. Post-translationally, phosphorylated by TAOK2, VRK2, MAPK11, MAPK12, MAPK14 and MINK1. In terms of processing, proteolytically cleaved in B cell lysosomes by cathepsin CTSG which degrades the major immunogenic MBP epitope and prevents the activation of MBP-specific autoreactive T cells.

The protein resides in the myelin membrane. Is, with PLP, the most abundant protein component of the myelin membrane in the CNS. Has a role in both the formation and stabilization of this compact multilayer arrangement of bilayers. Each splice variant and charge isomer may have a specialized function in the assembly of an optimized, biochemically functional myelin membrane. This is Myelin basic protein (MBP) from Pan troglodytes (Chimpanzee).